The chain runs to 282 residues: Protein DOG1-like 3 (282 aa).

In terms of domain architecture, DOG1 spans 11-254 (EQLQKGCYYE…HEWGRVREEQ (244 aa)).

This is Protein DOG1-like 3 from Arabidopsis thaliana (Mouse-ear cress).